The chain runs to 539 residues: Netrin-G1 (539 aa).

A signal peptide spans 1 to 28 (MYLSRFLSIHALWVTVSSVMQPYPLVWG). 3 disulfide bridges follow: cysteine 33/cysteine 50, cysteine 72/cysteine 92, and cysteine 80/cysteine 88. The Laminin N-terminal domain maps to 46–296 (DYMACQPEST…AISDIKVRGR (251 aa)). An NGL discriminant loop I region spans residues 80–91 (CAMGNPYMCNNE). An N-linked (GlcNAc...) asparagine glycan is attached at asparagine 133. Cysteine 182 and cysteine 206 are oxidised to a cystine. The segment at 208–214 (EEYSTGY) is NGL discriminant loop II. The interval 273-275 (EIF) is NGL discriminant loop III. 15 disulfide bridges follow: cysteine 297-cysteine 306, cysteine 299-cysteine 315, cysteine 317-cysteine 326, cysteine 329-cysteine 354, cysteine 364-cysteine 373, cysteine 366-cysteine 384, cysteine 387-cysteine 396, cysteine 399-cysteine 417, cysteine 420-cysteine 432, cysteine 422-cysteine 438, cysteine 440-cysteine 449, cysteine 452-cysteine 462, cysteine 467-cysteine 480, cysteine 474-cysteine 486, and cysteine 488-cysteine 497. Laminin EGF-like domains lie at 297-356 (CKCN…TCIP), 364-419 (CECF…VCIE), and 420-469 (CYCN…VCDN). N-linked (GlcNAc...) asparagine glycosylation is present at asparagine 320. N-linked (GlcNAc...) asparagine glycosylation occurs at asparagine 406. N-linked (GlcNAc...) asparagine glycosylation occurs at asparagine 433. Serine 510 carries GPI-anchor amidated serine lipidation. The propeptide at 511-539 (DSGQGAPPHGSPALLLLTTLLGTASPLVF) is removed in mature form.

In terms of assembly, interacts with NGL1. N-glycosylated. In terms of tissue distribution, highly expressed in the thalamus, with very low expression, if any, in other tissues.

It localises to the cell membrane. Functionally, involved in controlling patterning and neuronal circuit formation at the laminar, cellular, subcellular and synaptic levels. Promotes neurite outgrowth of both axons and dendrites. This is Netrin-G1 (NTNG1) from Homo sapiens (Human).